Reading from the N-terminus, the 376-residue chain is Flagellar P-ring protein (376 aa).

The first 29 residues, 1 to 29 (MTQRPFSLLSHLGRICLAAAMLAALPAQA), serve as a signal peptide directing secretion.

The protein belongs to the FlgI family. The basal body constitutes a major portion of the flagellar organelle and consists of four rings (L,P,S, and M) mounted on a central rod.

It is found in the periplasm. It localises to the bacterial flagellum basal body. Its function is as follows. Assembles around the rod to form the L-ring and probably protects the motor/basal body from shearing forces during rotation. The chain is Flagellar P-ring protein from Bordetella avium (strain 197N).